Reading from the N-terminus, the 448-residue chain is Bifunctional protein GlmU (448 aa).

The pyrophosphorylase stretch occupies residues 1 to 230 (MRSCLSIVLA…FDNIVGINNC (230 aa)). Residues 9–12 (LAAG), K23, Q76, and 81–82 (GT) each bind UDP-N-acetyl-alpha-D-glucosamine. A Mg(2+)-binding site is contributed by D106. Residues G142, E156, N171, and N228 each contribute to the UDP-N-acetyl-alpha-D-glucosamine site. Residue N228 coordinates Mg(2+). Residues 231-251 (FELFEADSLWQKRKARDLMLS) form a linker region. An N-acetyltransferase region spans residues 252–448 (GVTILKPETV…VRLSGNQQKK (197 aa)). The UDP-N-acetyl-alpha-D-glucosamine site is built by R317 and K335. Residue H347 is the Proton acceptor of the active site. Y350 and N361 together coordinate UDP-N-acetyl-alpha-D-glucosamine. Residues A364, 370-371 (NY), S389, S407, and R424 contribute to the acetyl-CoA site.

The protein in the N-terminal section; belongs to the N-acetylglucosamine-1-phosphate uridyltransferase family. It in the C-terminal section; belongs to the transferase hexapeptide repeat family. Homotrimer. Requires Mg(2+) as cofactor.

The protein localises to the cytoplasm. The catalysed reaction is alpha-D-glucosamine 1-phosphate + acetyl-CoA = N-acetyl-alpha-D-glucosamine 1-phosphate + CoA + H(+). The enzyme catalyses N-acetyl-alpha-D-glucosamine 1-phosphate + UTP + H(+) = UDP-N-acetyl-alpha-D-glucosamine + diphosphate. It participates in nucleotide-sugar biosynthesis; UDP-N-acetyl-alpha-D-glucosamine biosynthesis; N-acetyl-alpha-D-glucosamine 1-phosphate from alpha-D-glucosamine 6-phosphate (route II): step 2/2. Its pathway is nucleotide-sugar biosynthesis; UDP-N-acetyl-alpha-D-glucosamine biosynthesis; UDP-N-acetyl-alpha-D-glucosamine from N-acetyl-alpha-D-glucosamine 1-phosphate: step 1/1. The protein operates within bacterial outer membrane biogenesis; LPS lipid A biosynthesis. Functionally, catalyzes the last two sequential reactions in the de novo biosynthetic pathway for UDP-N-acetylglucosamine (UDP-GlcNAc). The C-terminal domain catalyzes the transfer of acetyl group from acetyl coenzyme A to glucosamine-1-phosphate (GlcN-1-P) to produce N-acetylglucosamine-1-phosphate (GlcNAc-1-P), which is converted into UDP-GlcNAc by the transfer of uridine 5-monophosphate (from uridine 5-triphosphate), a reaction catalyzed by the N-terminal domain. This chain is Bifunctional protein GlmU, found in Bartonella quintana (strain Toulouse) (Rochalimaea quintana).